Reading from the N-terminus, the 138-residue chain is Ribosome-binding factor A (138 aa).

A disordered region spans residues 119–138 (RSPEVQRDLGPSNEKDDEQN).

Belongs to the RbfA family. In terms of assembly, monomer. Binds 30S ribosomal subunits, but not 50S ribosomal subunits or 70S ribosomes.

The protein resides in the cytoplasm. Its function is as follows. One of several proteins that assist in the late maturation steps of the functional core of the 30S ribosomal subunit. Associates with free 30S ribosomal subunits (but not with 30S subunits that are part of 70S ribosomes or polysomes). Required for efficient processing of 16S rRNA. May interact with the 5'-terminal helix region of 16S rRNA. The polypeptide is Ribosome-binding factor A (Agrobacterium fabrum (strain C58 / ATCC 33970) (Agrobacterium tumefaciens (strain C58))).